A 282-amino-acid chain; its full sequence is Cyanocobalamin reductase / alkylcobalamin dealkylase (282 aa).

Residues Asp104, 115 to 118, 129 to 131, Cys149, and Ile160 each bind substrate; these read ILAQ and YYQ. Residues 234–282 form a disordered region; the sequence is LGLAQPSEKPSSPSPDLPFTTPAPKKPGNPSRARSWLSPRVSPPASPGP. Residues Ser245, Ser247, Ser275, and Ser279 each carry the phosphoserine modification.

This sequence belongs to the MMACHC family. Monomer in the absence of bound substrate. Homodimer; dimerization is triggered by binding to FMN or adenosylcobalamin. Interacts with LMBRD1 and ABCD4; the interaction ensures the transport of cobalamin from the lysosome to the cytoplasm. Forms a multiprotein complex with MMADHC, MTR and MTRR; the interaction with MTR could modulate MMACHC-dependent processing of cobalamin. Heterodimer with MMADHC; the interaction might play a role in the regulation of the balance between AdoCbl and MeCbl synthesis. It depends on FAD as a cofactor. FMN serves as cofactor. Widely expressed. Expressed at higher level in fetal liver. Also expressed in spleen, lymph node, thymus and bone marrow. Weakly or not expressed in peripheral blood leukocytes.

The protein resides in the cytoplasm. The protein localises to the cytosol. The catalysed reaction is 2 cob(II)alamin-[cyanocobalamin reductase] + 2 hydrogen cyanide + NADP(+) = 2 cyanocob(III)alamin + 2 apo-[cyanocobalamin reductase] + NADPH + H(+). The enzyme catalyses apo-[alkylcobalamin reductase] + an R-cob(III)alamin + glutathione = cob(I)alamin-[alkylcobalamin reductase] + an S-substituted glutathione + H(+). It carries out the reaction apo-[alkylcobalamin reductase] + methylcob(III)alamin + glutathione = S-methyl glutathione + cob(I)alamin-[alkylcobalamin reductase] + H(+). It catalyses the reaction apo-[alkylcobalamin reductase] + adenosylcob(III)alamin + glutathione = S-adenosylglutathione + cob(I)alamin-[alkylcobalamin reductase] + H(+). In terms of biological role, cobalamin (vitamin B12) cytosolic chaperone that catalyzes the reductive decyanation of cyanocob(III)alamin (cyanocobalamin, CNCbl) to yield cob(II)alamin and cyanide, using FAD or FMN as cofactors and NADPH as cosubstrate. Cyanocobalamin constitutes the inactive form of vitamin B12 introduced from the diet, and is converted into the active cofactors methylcobalamin (MeCbl) involved in methionine biosynthesis, and 5'-deoxyadenosylcobalamin (AdoCbl) involved in the TCA cycle. Forms a complex with the lysosomal transporter ABCD4 and its chaperone LMBRD1, to transport cobalamin across the lysosomal membrane into the cytosol. The processing of cobalamin in the cytosol occurs in a multiprotein complex composed of at least MMACHC, MMADHC, MTRR (methionine synthase reductase) and MTR (methionine synthase) which may contribute to shuttle safely and efficiently cobalamin towards MTR in order to produce methionine. Also acts as a glutathione transferase by catalyzing the dealkylation of the alkylcob(III)alamins MeCbl and AdoCbl, using the thiolate of glutathione for nucleophilic displacement to generate cob(I)alamin and the corresponding glutathione thioether. The conversion of incoming MeCbl or AdoCbl into a common intermediate cob(I)alamin is necessary to meet the cellular needs for both cofactors. Cysteine and homocysteine cannot substitute for glutathione in this reaction. The protein is Cyanocobalamin reductase / alkylcobalamin dealkylase of Homo sapiens (Human).